Here is a 163-residue protein sequence, read N- to C-terminus: Putative 4-hydroxy-4-methyl-2-oxoglutarate aldolase (163 aa).

Residues Gly-76–Leu-79 and Arg-98 each bind substrate. Asp-99 is a binding site for a divalent metal cation.

This sequence belongs to the class II aldolase/RraA-like family. Homotrimer. It depends on a divalent metal cation as a cofactor.

The catalysed reaction is 4-hydroxy-4-methyl-2-oxoglutarate = 2 pyruvate. It carries out the reaction oxaloacetate + H(+) = pyruvate + CO2. Catalyzes the aldol cleavage of 4-hydroxy-4-methyl-2-oxoglutarate (HMG) into 2 molecules of pyruvate. Also contains a secondary oxaloacetate (OAA) decarboxylase activity due to the common pyruvate enolate transition state formed following C-C bond cleavage in the retro-aldol and decarboxylation reactions. The polypeptide is Putative 4-hydroxy-4-methyl-2-oxoglutarate aldolase (Pseudomonas entomophila (strain L48)).